We begin with the raw amino-acid sequence, 157 residues long: Probable succinate transporter subunit YjjB (157 aa).

Transmembrane regions (helical) follow at residues 8-28 (FALA…AMVF), 50-70 (MILM…SMLV), 87-107 (VFTV…TAMI), and 129-149 (FLTA…PGLW).

The protein belongs to the ThrE exporter (TC 2.A.79) family. In terms of assembly, the transporter is composed of YjjB and YjjP.

The protein resides in the cell inner membrane. Involved in succinate export with YjjP. Both proteins are required for export. The polypeptide is Probable succinate transporter subunit YjjB (Escherichia coli (strain SE11)).